Consider the following 436-residue polypeptide: Ribulose bisphosphate carboxylase large chain (436 aa).

Residues Asn104 and Thr154 each contribute to the substrate site. The active-site Proton acceptor is Lys156. Lys158 is a binding site for substrate. Mg(2+) contacts are provided by Lys182, Asp184, and Glu185. Lys182 carries the N6-carboxylysine modification. The active-site Proton acceptor is the His275. Positions 276, 308, and 360 each coordinate substrate.

The protein belongs to the RuBisCO large chain family. Type I subfamily. In terms of assembly, heterohexadecamer of 8 large chains and 8 small chains. Requires Mg(2+) as cofactor.

Its subcellular location is the plastid. The protein resides in the chloroplast. The catalysed reaction is 2 (2R)-3-phosphoglycerate + 2 H(+) = D-ribulose 1,5-bisphosphate + CO2 + H2O. It catalyses the reaction D-ribulose 1,5-bisphosphate + O2 = 2-phosphoglycolate + (2R)-3-phosphoglycerate + 2 H(+). Its function is as follows. RuBisCO catalyzes two reactions: the carboxylation of D-ribulose 1,5-bisphosphate, the primary event in carbon dioxide fixation, as well as the oxidative fragmentation of the pentose substrate in the photorespiration process. Both reactions occur simultaneously and in competition at the same active site. This Euglena viridis (Cercaria viridis) protein is Ribulose bisphosphate carboxylase large chain.